We begin with the raw amino-acid sequence, 286 residues long: MVAVIIKGNEVAEKKRAQLKEEVVKLKEQGIVPGLAVILVGEDPASRSYIKGKQKGCEQVGIYSELIEFPDTITEERLLAEIDRLNEDDRINGILVQLPLPKHIEEKAIIERISPKKDVDGFHPINIGRMMTGQDTFLPCTPHGILELVKETNIDISGKHVVVIGRSNIVGKPVGQLFLNENATVTYCHSKTKNIKELSKLADILVVAVGRPKMVTADYIKEGAVVIDVGVNRLETGKLCGDVDFENVLDIAGYITPVPKGVGPMTITMLLHNTVESAKRAGFICK.

Residues 165–167, serine 190, and valine 231 each bind NADP(+); that span reads GRS.

Belongs to the tetrahydrofolate dehydrogenase/cyclohydrolase family. In terms of assembly, homodimer.

The enzyme catalyses (6R)-5,10-methylene-5,6,7,8-tetrahydrofolate + NADP(+) = (6R)-5,10-methenyltetrahydrofolate + NADPH. It carries out the reaction (6R)-5,10-methenyltetrahydrofolate + H2O = (6R)-10-formyltetrahydrofolate + H(+). It functions in the pathway one-carbon metabolism; tetrahydrofolate interconversion. In terms of biological role, catalyzes the oxidation of 5,10-methylenetetrahydrofolate to 5,10-methenyltetrahydrofolate and then the hydrolysis of 5,10-methenyltetrahydrofolate to 10-formyltetrahydrofolate. The chain is Bifunctional protein FolD from Bacillus cytotoxicus (strain DSM 22905 / CIP 110041 / 391-98 / NVH 391-98).